The primary structure comprises 495 residues: DNA double-strand break repair helicase HerA (495 aa).

Residues arginine 142, 151–156 (GSGKSN), and 459–460 (KI) contribute to the ATP site.

It belongs to the HerA family. Interacts with Rad50 and Mre11.

The enzyme catalyses Couples ATP hydrolysis with the unwinding of duplex DNA at the replication fork by translocating in the 5'-3' direction. This creates two antiparallel DNA single strands (ssDNA). The leading ssDNA polymer is the template for DNA polymerase III holoenzyme which synthesizes a continuous strand.. The catalysed reaction is ATP + H2O = ADP + phosphate + H(+). It catalyses the reaction Couples ATP hydrolysis with the unwinding of duplex DNA by translocating in the 3'-5' direction.. ATPase activity is slightly stimulated by either circular single- or double-stranded (ds)DNA with a weak preference for dsDNA. Its function is as follows. Involved in DNA double-strand break (DSB) repair. Probably acts with NurA to stimulate resection of the 5' strand and produce the long 3' single-strand that is required for RadA loading. Has DNA-dependent ATPase activity and bidirectional DNA helicase activity. Loads on either a 3' or a 5' DNA tail for subsequent DNA unwinding; has no activity on blunt-end DNA. The polypeptide is DNA double-strand break repair helicase HerA (Sulfolobus acidocaldarius (strain ATCC 33909 / DSM 639 / JCM 8929 / NBRC 15157 / NCIMB 11770)).